The following is a 359-amino-acid chain: ATP-dependent (S)-NAD(P)H-hydrate dehydratase (359 aa).

Residues 61–350 (LLEEARKVVP…SEINSVFVNN (290 aa)) enclose the YjeF C-terminal domain. (6S)-NADPHX contacts are provided by residues Gly161 and 214–220 (NVVEFQR). ATP-binding positions include 256-260 (KGEVD) and 275-284 (GSPRRCGGQG). Asp285 lines the (6S)-NADPHX pocket.

Belongs to the NnrD/CARKD family. Requires Mg(2+) as cofactor.

The catalysed reaction is (6S)-NADHX + ATP = ADP + phosphate + NADH + H(+). It catalyses the reaction (6S)-NADPHX + ATP = ADP + phosphate + NADPH + H(+). Its function is as follows. Catalyzes the dehydration of the S-form of NAD(P)HX at the expense of ATP, which is converted to ADP. Together with NAD(P)HX epimerase, which catalyzes the epimerization of the S- and R-forms, the enzyme allows the repair of both epimers of NAD(P)HX, a damaged form of NAD(P)H that is a result of enzymatic or heat-dependent hydration. In Ciona intestinalis (Transparent sea squirt), this protein is ATP-dependent (S)-NAD(P)H-hydrate dehydratase.